Consider the following 483-residue polypeptide: Protein nucleotidyltransferase YdiU (483 aa).

Residues Gly87, Gly89, Arg90, Lys110, Asp122, Gly123, Arg173, and Arg180 each contribute to the ATP site. Asp249 serves as the catalytic Proton acceptor. Mg(2+) is bound by residues Asn250 and Asp259. Asp259 contacts ATP.

It belongs to the SELO family. It depends on Mg(2+) as a cofactor. The cofactor is Mn(2+).

The enzyme catalyses L-seryl-[protein] + ATP = 3-O-(5'-adenylyl)-L-seryl-[protein] + diphosphate. The catalysed reaction is L-threonyl-[protein] + ATP = 3-O-(5'-adenylyl)-L-threonyl-[protein] + diphosphate. It catalyses the reaction L-tyrosyl-[protein] + ATP = O-(5'-adenylyl)-L-tyrosyl-[protein] + diphosphate. It carries out the reaction L-histidyl-[protein] + UTP = N(tele)-(5'-uridylyl)-L-histidyl-[protein] + diphosphate. The enzyme catalyses L-seryl-[protein] + UTP = O-(5'-uridylyl)-L-seryl-[protein] + diphosphate. The catalysed reaction is L-tyrosyl-[protein] + UTP = O-(5'-uridylyl)-L-tyrosyl-[protein] + diphosphate. In terms of biological role, nucleotidyltransferase involved in the post-translational modification of proteins. It can catalyze the addition of adenosine monophosphate (AMP) or uridine monophosphate (UMP) to a protein, resulting in modifications known as AMPylation and UMPylation. This chain is Protein nucleotidyltransferase YdiU, found in Pectobacterium carotovorum subsp. carotovorum (strain PC1).